The chain runs to 355 residues: DNA polymerase IV (355 aa).

One can recognise a UmuC domain in the interval 7-188 (IIHIDMDCFY…LPVRKLFGVG (182 aa)). 2 residues coordinate Mg(2+): Asp11 and Asp106. Glu107 is an active-site residue.

Belongs to the DNA polymerase type-Y family. As to quaternary structure, monomer. Mg(2+) is required as a cofactor.

The protein resides in the cytoplasm. The enzyme catalyses DNA(n) + a 2'-deoxyribonucleoside 5'-triphosphate = DNA(n+1) + diphosphate. Its function is as follows. Poorly processive, error-prone DNA polymerase involved in untargeted mutagenesis. Copies undamaged DNA at stalled replication forks, which arise in vivo from mismatched or misaligned primer ends. These misaligned primers can be extended by PolIV. Exhibits no 3'-5' exonuclease (proofreading) activity. May be involved in translesional synthesis, in conjunction with the beta clamp from PolIII. This chain is DNA polymerase IV, found in Legionella pneumophila subsp. pneumophila (strain Philadelphia 1 / ATCC 33152 / DSM 7513).